We begin with the raw amino-acid sequence, 629 residues long: tRNA uridine 5-carboxymethylaminomethyl modification enzyme MnmG (629 aa).

FAD-binding positions include 18–23 (GGGHAG), V130, and S188. 280–294 (GPRYCPSIEDKVVRF) is an NAD(+) binding site. Q377 is an FAD binding site.

The protein belongs to the MnmG family. In terms of assembly, homodimer. Heterotetramer of two MnmE and two MnmG subunits. It depends on FAD as a cofactor.

The protein localises to the cytoplasm. In terms of biological role, NAD-binding protein involved in the addition of a carboxymethylaminomethyl (cmnm) group at the wobble position (U34) of certain tRNAs, forming tRNA-cmnm(5)s(2)U34. The sequence is that of tRNA uridine 5-carboxymethylaminomethyl modification enzyme MnmG from Granulibacter bethesdensis (strain ATCC BAA-1260 / CGDNIH1).